A 114-amino-acid polypeptide reads, in one-letter code: Ribosome-binding factor A (114 aa).

This sequence belongs to the RbfA family. Monomer. Binds 30S ribosomal subunits, but not 50S ribosomal subunits or 70S ribosomes.

It localises to the cytoplasm. In terms of biological role, one of several proteins that assist in the late maturation steps of the functional core of the 30S ribosomal subunit. Associates with free 30S ribosomal subunits (but not with 30S subunits that are part of 70S ribosomes or polysomes). Required for efficient processing of 16S rRNA. May interact with the 5'-terminal helix region of 16S rRNA. The chain is Ribosome-binding factor A from Vesicomyosocius okutanii subsp. Calyptogena okutanii (strain HA).